The sequence spans 148 residues: UPF0756 membrane protein YeaL (148 aa).

A run of 4 helical transmembrane segments spans residues 14 to 34, 51 to 71, 86 to 106, and 112 to 132; these read ALGF…LIIV, LSIG…SGTL, LVAI…VTLM, and LVAG…GVPV.

This sequence belongs to the UPF0756 family.

Its subcellular location is the cell membrane. The chain is UPF0756 membrane protein YeaL from Escherichia coli O157:H7.